A 455-amino-acid polypeptide reads, in one-letter code: Tumor necrosis factor receptor superfamily member 1A (455 aa).

The signal sequence occupies residues Met-1–Gly-29. Over Leu-30–Thr-211 the chain is Extracellular. TNFR-Cys repeat units lie at residues Val-43 to Arg-82, Glu-83 to Cys-125, Gly-126 to Cys-166, and Thr-167 to Leu-196. 7 disulfides stabilise this stretch: Cys-44/Cys-58, Cys-59/Cys-72, Cys-62/Cys-81, Cys-84/Cys-99, Cys-102/Cys-117, Cys-105/Cys-125, and Cys-127/Cys-143. Residue Asn-54 is glycosylated (N-linked (GlcNAc...) asparagine). Asn-145 and Asn-151 each carry an N-linked (GlcNAc...) asparagine glycan. 5 disulfide bridges follow: Cys-146–Cys-158, Cys-149–Cys-166, Cys-168–Cys-179, Cys-182–Cys-195, and Cys-185–Cys-191. A helical transmembrane segment spans residues Val-212 to Leu-232. Residues Met-233–Arg-455 lie on the Cytoplasmic side of the membrane. Residues Glu-254–Phe-273 are disordered. The tract at residues Leu-338 to Pro-348 is N-SMase activation domain (NSD). Residues Pro-356 to Leu-441 enclose the Death domain. A glycan ((Microbial infection) N-beta-linked (GlcNAc) arginine) is linked at Arg-376.

As to quaternary structure, binding of TNF to the extracellular domain leads to homotrimerization. The aggregated death domains provide a novel molecular interface that interacts specifically with the death domain of TRADD. Various TRADD-interacting proteins such as TRAFS, RIPK1 and possibly FADD, are recruited to the complex by their association with TRADD. This complex activates at least two distinct signaling cascades, apoptosis and NF-kappa-B signaling. Interacts with BAG4, BABAM2, FEM1B, GRB2, SQSTM1 and TRPC4AP. Interacts directly with NOL3 (via CARD domain); inhibits TNF-signaling pathway. Interacts with SH3RF2, TRADD and RIPK1. SH3RF2 facilitates the recruitment of RIPK1 and TRADD to TNFRSF1A in a TNF-alpha-dependent process. Interacts with PGLYRP1; this interaction is important for cell death induction. Interacts (via death domain) with MADD (via death domain). (Microbial infection) Interacts with mumps virus protein SH; this interaction inhibits downstream NF-kappa-B pathway activation. In terms of assembly, (Microbial infection) Interacts with HCV core protein. As to quaternary structure, (Microbial infection) Interacts with human cytomegalovirus/HHV-5 protein UL138. (Microbial infection) Interacts with host TNFRSF1A; this interaction leads to the stimulation of both surface expression and shedding of TNFRSF1A. The soluble form is produced from the membrane form by proteolytic processing. In terms of processing, (Microbial infection) Glycosylated at Arg-376 by enteropathogenic E.coli protein NleB1 and S.typhimurium protein Ssek3: arginine GlcNAcylation prevents homotypic/heterotypic death domain interactions.

The protein localises to the cell membrane. Its subcellular location is the golgi apparatus membrane. It localises to the secreted. Its function is as follows. Receptor for TNFSF2/TNF-alpha and homotrimeric TNFSF1/lymphotoxin-alpha. The adapter molecule FADD recruits caspase-8 to the activated receptor. The resulting death-inducing signaling complex (DISC) performs caspase-8 proteolytic activation which initiates the subsequent cascade of caspases (aspartate-specific cysteine proteases) mediating apoptosis. Contributes to the induction of non-cytocidal TNF effects including anti-viral state and activation of the acid sphingomyelinase. This chain is Tumor necrosis factor receptor superfamily member 1A (TNFRSF1A), found in Homo sapiens (Human).